A 410-amino-acid polypeptide reads, in one-letter code: Interstrand DNA cross-link repair glycosylase (410 aa).

A QXD; important for activity motif is present at residues 45–47; the sequence is QID.

The protein belongs to the DNA glycosylase AlkZ-like family.

Its function is as follows. DNA glycosylase involved in the repair of interstrand DNA cross-links (ICLs), which are highly toxic DNA lesions that covalently tether the opposing strands of DNA, thereby inhibiting essential cellular processes such as DNA replication and transcription. Acts by unhooking both sides of the ICLs, forming abasic (AP) sites on both strands. Unhooks ICLs derived from various cross-linking agents, including azinomycin B (AZB) and mechlorethamine, also known as nitrogen mustard (NM), protecting cells from the toxicity of these cross-linking agents. In vitro, also acts on monoadducts and can catalyze the excision of N7-methylguanine (7mGua) from an oligonucleotide containing N7-methyldeoxyguanosine (d7mG). Shows no unhooking activity toward FaPy-ICLs. This is Interstrand DNA cross-link repair glycosylase (ycaQ) from Escherichia coli (strain K12).